The chain runs to 90 residues: Probable Fe(2+)-trafficking protein (90 aa).

Belongs to the Fe(2+)-trafficking protein family.

Functionally, could be a mediator in iron transactions between iron acquisition and iron-requiring processes, such as synthesis and/or repair of Fe-S clusters in biosynthetic enzymes. This is Probable Fe(2+)-trafficking protein from Chromohalobacter salexigens (strain ATCC BAA-138 / DSM 3043 / CIP 106854 / NCIMB 13768 / 1H11).